Reading from the N-terminus, the 349-residue chain is GDSL esterase/lipase At1g58725 (349 aa).

A signal peptide spans 1 to 19 (MKIQILLFALVLIFVEANA). Asn25 is a glycosylation site (N-linked (GlcNAc...) asparagine). Ser37 serves as the catalytic Nucleophile. Asn316 carries an N-linked (GlcNAc...) asparagine glycan. Catalysis depends on residues Asp324 and His327.

Belongs to the 'GDSL' lipolytic enzyme family.

Its subcellular location is the secreted. This Arabidopsis thaliana (Mouse-ear cress) protein is GDSL esterase/lipase At1g58725.